The following is a 497-amino-acid chain: UDP-N-acetylmuramoyl-L-alanyl-D-glutamate--2,6-diaminopimelate ligase (497 aa).

S32 provides a ligand contact to UDP-N-acetyl-alpha-D-muramoyl-L-alanyl-D-glutamate. 113–119 lines the ATP pocket; it reads GTNGKTT. UDP-N-acetyl-alpha-D-muramoyl-L-alanyl-D-glutamate is bound by residues 155–156, S182, Q188, and R190; that span reads TT. Position 222 is an N6-carboxylysine (K222). Residues R385, 409 to 412, G460, and E464 contribute to the meso-2,6-diaminopimelate site; that span reads DNPR. The Meso-diaminopimelate recognition motif signature appears at 409–412; sequence DNPR.

The protein belongs to the MurCDEF family. MurE subfamily. Requires Mg(2+) as cofactor. In terms of processing, carboxylation is probably crucial for Mg(2+) binding and, consequently, for the gamma-phosphate positioning of ATP.

The protein localises to the cytoplasm. It catalyses the reaction UDP-N-acetyl-alpha-D-muramoyl-L-alanyl-D-glutamate + meso-2,6-diaminopimelate + ATP = UDP-N-acetyl-alpha-D-muramoyl-L-alanyl-gamma-D-glutamyl-meso-2,6-diaminopimelate + ADP + phosphate + H(+). It participates in cell wall biogenesis; peptidoglycan biosynthesis. Functionally, catalyzes the addition of meso-diaminopimelic acid to the nucleotide precursor UDP-N-acetylmuramoyl-L-alanyl-D-glutamate (UMAG) in the biosynthesis of bacterial cell-wall peptidoglycan. This is UDP-N-acetylmuramoyl-L-alanyl-D-glutamate--2,6-diaminopimelate ligase from Thermosynechococcus vestitus (strain NIES-2133 / IAM M-273 / BP-1).